Consider the following 145-residue polypeptide: uncharacterized protein (145 aa).

The chain crosses the membrane as a helical span at residues 63-83 (FLCLPLFLSFLVANLILWLSF).

The protein resides in the mitochondrion membrane. This is an uncharacterized protein from Arabidopsis thaliana (Mouse-ear cress).